Reading from the N-terminus, the 388-residue chain is Na(+)/H(+) antiporter NhaA (388 aa).

Residues 1-11 (MKHLHRFFSSD) are Cytoplasmic-facing. A helical transmembrane segment spans residues 12-31 (ASGGIILIIAAILAMMMANS). Residues 32–58 (GATSGWYHDFLETPVQLRVGSLEINKN) lie on the Periplasmic side of the membrane. The helical transmembrane segment at 59–80 (MLLWINDALMAVFFLLVGLEVK) threads the bilayer. Residues 81–96 (RELMQGSLASLRQAAF) lie on the Cytoplasmic side of the membrane. Residues 97 to 116 (PVIAAIGGMIVPALLYLAFN) form a helical membrane-spanning segment. The Periplasmic portion of the chain corresponds to 117 to 122 (YADPIT). Residues 123-130 (REGWAIPA) form a helical membrane-spanning segment. Over 131–154 (ATDIAFALGVLALLGSRVPLALKI) the chain is Cytoplasmic. The helical transmembrane segment at 155–176 (FLMALAIIDDLGAIIIIALFYT) threads the bilayer. The Periplasmic portion of the chain corresponds to 177–180 (NDLS). The helical transmembrane segment at 181 to 200 (MASLGVAAVAIAVLAVLNLC) threads the bilayer. At 201 to 204 (GVRR) the chain is on the cytoplasmic side. The helical transmembrane segment at 205-222 (TGVYILVGVVLWTAVLKS) threads the bilayer. A topological domain (periplasmic) is located at residue Gly-223. Residues 224-236 (VHATLAGVIVGFF) traverse the membrane as a helical segment. Over 237–253 (IPLKEKHGRSPAKRLEH) the chain is Cytoplasmic. A helical transmembrane segment spans residues 254 to 272 (VLHPWVAYLILPLFAFANA). Over 273–286 (GVSLQGVTLDGLTS) the chain is Periplasmic. A helical transmembrane segment spans residues 287-310 (ILPLGIIAGLLIGKPLGISLFCWL). The Cytoplasmic segment spans residues 311–339 (ALRLKLAHLPEGTTYQQIMAVGILCGIGF). Residues 340 to 350 (TMSIFIASLAF) form a helical membrane-spanning segment. Over 351 to 357 (GSVDPEL) the chain is Periplasmic. Residues 358 to 380 (INWAKLGILVGSISSAVIGYSWL) traverse the membrane as a helical segment. Residues 381-388 (RVRLRPSV) are Cytoplasmic-facing.

It belongs to the NhaA Na(+)/H(+) (TC 2.A.33) antiporter family.

It is found in the cell inner membrane. The catalysed reaction is Na(+)(in) + 2 H(+)(out) = Na(+)(out) + 2 H(+)(in). Functionally, na(+)/H(+) antiporter that extrudes sodium in exchange for external protons. The polypeptide is Na(+)/H(+) antiporter NhaA (Shigella boydii serotype 4 (strain Sb227)).